Consider the following 88-residue polypeptide: UPF0237 protein SMU_72 (88 aa).

Residues 4 to 77 form the ACT domain; sequence IITVVGKDRT…ETLNVKINIQ (74 aa).

Belongs to the UPF0237 family. In terms of assembly, homodimer.

This chain is UPF0237 protein SMU_72, found in Streptococcus mutans serotype c (strain ATCC 700610 / UA159).